A 157-amino-acid chain; its full sequence is Protein Smg (157 aa).

It belongs to the Smg family.

The chain is Protein Smg from Escherichia coli O139:H28 (strain E24377A / ETEC).